The primary structure comprises 652 residues: Acetyl-coenzyme A synthetase (652 aa).

CoA contacts are provided by residues Arg-191 to Arg-194, Thr-311, and Asn-335. Residues Gly-387–Pro-389, Asp-411–Thr-416, Asp-500, and Arg-515 contribute to the ATP site. Residue Ser-523 coordinates CoA. Residue Arg-526 participates in ATP binding. Residues Val-537, His-539, and Ile-542 each coordinate Mg(2+). Arg-584 contributes to the CoA binding site. At Lys-609 the chain carries N6-acetyllysine.

Belongs to the ATP-dependent AMP-binding enzyme family. The cofactor is Mg(2+). Acetylated. Deacetylation by the SIR2-homolog deacetylase activates the enzyme.

It catalyses the reaction acetate + ATP + CoA = acetyl-CoA + AMP + diphosphate. Catalyzes the conversion of acetate into acetyl-CoA (AcCoA), an essential intermediate at the junction of anabolic and catabolic pathways. Acs undergoes a two-step reaction. In the first half reaction, Acs combines acetate with ATP to form acetyl-adenylate (AcAMP) intermediate. In the second half reaction, it can then transfer the acetyl group from AcAMP to the sulfhydryl group of CoA, forming the product AcCoA. Its function is as follows. Enables the cell to use acetate during aerobic growth to generate energy via the TCA cycle, and biosynthetic compounds via the glyoxylate shunt. Acetylates CheY, the response regulator involved in flagellar movement and chemotaxis. In Escherichia coli O157:H7, this protein is Acetyl-coenzyme A synthetase.